We begin with the raw amino-acid sequence, 171 residues long: Secretion monitor (171 aa).

A signal peptide spans 1–36; sequence MIGILNRWRQFGRRYFWPHLLLGMVAASLGLPTSLN.

It belongs to the SecM family.

The protein localises to the cytoplasm. It is found in the cytosol. Its subcellular location is the periplasm. Its function is as follows. Regulates secA expression by translational coupling of the secM secA operon. Translational pausing at a specific Pro residue 5 residues before the end of the protein may allow disruption of a mRNA repressor helix that normally suppresses secA translation initiation. This Pectobacterium carotovorum subsp. carotovorum (strain PC1) protein is Secretion monitor.